We begin with the raw amino-acid sequence, 356 residues long: UDP-N-acetylglucosamine--N-acetylmuramyl-(pentapeptide) pyrophosphoryl-undecaprenol N-acetylglucosamine transferase (356 aa).

UDP-N-acetyl-alpha-D-glucosamine-binding positions include 14 to 16, N126, R162, S190, I244, and Q289; that span reads TGG.

This sequence belongs to the glycosyltransferase 28 family. MurG subfamily.

Its subcellular location is the cell inner membrane. It carries out the reaction di-trans,octa-cis-undecaprenyl diphospho-N-acetyl-alpha-D-muramoyl-L-alanyl-D-glutamyl-meso-2,6-diaminopimeloyl-D-alanyl-D-alanine + UDP-N-acetyl-alpha-D-glucosamine = di-trans,octa-cis-undecaprenyl diphospho-[N-acetyl-alpha-D-glucosaminyl-(1-&gt;4)]-N-acetyl-alpha-D-muramoyl-L-alanyl-D-glutamyl-meso-2,6-diaminopimeloyl-D-alanyl-D-alanine + UDP + H(+). Its pathway is cell wall biogenesis; peptidoglycan biosynthesis. In terms of biological role, cell wall formation. Catalyzes the transfer of a GlcNAc subunit on undecaprenyl-pyrophosphoryl-MurNAc-pentapeptide (lipid intermediate I) to form undecaprenyl-pyrophosphoryl-MurNAc-(pentapeptide)GlcNAc (lipid intermediate II). In Cupriavidus pinatubonensis (strain JMP 134 / LMG 1197) (Cupriavidus necator (strain JMP 134)), this protein is UDP-N-acetylglucosamine--N-acetylmuramyl-(pentapeptide) pyrophosphoryl-undecaprenol N-acetylglucosamine transferase.